Reading from the N-terminus, the 240-residue chain is uncharacterized protein (240 aa).

The signal sequence occupies residues 1-18; that stretch reads MTRYTYLFILQIISCSFA. Asn-127 carries N-linked (GlcNAc...) asparagine glycosylation. The helical transmembrane segment at 215-235 threads the bilayer; that stretch reads GFISSSQLPQFVYLIVFTIIG.

It is found in the membrane. This is an uncharacterized protein from Caenorhabditis elegans.